Here is a 105-residue protein sequence, read N- to C-terminus: Guanidinium exporter (105 aa).

A helical transmembrane segment spans residues 1–21 (MSWIILVIAGLLEVVWAVGLK). The Cytoplasmic portion of the chain corresponds to 22-28 (YTHGFSR). Residues 29–49 (LTPSVITVTAMIVSMALLAWA) form a helical membrane-spanning segment. The Periplasmic segment spans residues 50–57 (MKSLPVGT). The helical transmembrane segment at 58 to 78 (AYAVWTGIGAVGAAITGIVLL) threads the bilayer. At 79 to 81 (GES) the chain is on the cytoplasmic side. Residues 82 to 102 (ANPMRLASLALIVLGIIGLKL) traverse the membrane as a helical segment. Residues 103-105 (STH) are Periplasmic-facing.

The protein belongs to the drug/metabolite transporter (DMT) superfamily. Small multidrug resistance (SMR) (TC 2.A.7.1) family. Gdx/SugE subfamily.

The protein resides in the cell inner membrane. Its function is as follows. Guanidinium ion exporter. Couples guanidinium export to the proton motive force, exchanging one guanidinium ion for two protons. The polypeptide is Guanidinium exporter (Escherichia coli O157:H7).